The primary structure comprises 294 residues: MDLDKVKTFYNNVAPQLRDLFGIFIKRCKEDNITISAGHLAYVTLLSLVPFIMVTFTIMSAFPAFASVRSKLEHFVFSNFVPTASDVVHKYMTDFVGNASQMSAIGILSLLVVALMLISNVDKTLNRIWRTQSDRPIVYTFAIYWMVITLGPMLIGSSVVVSSYLTGLAAFTEEYTPGLGTFLLSLVPSGAALLAFAILYMVVPNRRVYARHAFVGAIVATIAFEITKSGFALYVTNFPSYELIYGALAVVPILFLWVYLSWIIVLFGAEFTCSLGEAFENKKAEHAPRKVPKE.

Transmembrane regions (helical) follow at residues 45–65 (LLSLVPFIMVTFTIMSAFPAF), 99–119 (ASQMSAIGILSLLVVALMLIS), 141–161 (FAIYWMVITLGPMLIGSSVVV), 182–202 (FLLSLVPSGAALLAFAILYMV), 213–233 (AFVGAIVATIAFEITKSGFAL), and 247–267 (ALAVVPILFLWVYLSWIIVLF).

This sequence belongs to the UPF0761 family.

It is found in the cell inner membrane. The polypeptide is UPF0761 membrane protein MADE_1017605/MADE_1018330 (Alteromonas mediterranea (strain DSM 17117 / CIP 110805 / LMG 28347 / Deep ecotype)).